We begin with the raw amino-acid sequence, 168 residues long: 6,7-dimethyl-8-ribityllumazine synthase (168 aa).

5-amino-6-(D-ribitylamino)uracil is bound by residues Trp31, 65-67 (SFE), and 89-91 (CVV). 94 to 95 (DT) lines the (2S)-2-hydroxy-3-oxobutyl phosphate pocket. The active-site Proton donor is the His97. Residue Tyr122 participates in 5-amino-6-(D-ribitylamino)uracil binding. Arg136 lines the (2S)-2-hydroxy-3-oxobutyl phosphate pocket.

Belongs to the DMRL synthase family.

It carries out the reaction (2S)-2-hydroxy-3-oxobutyl phosphate + 5-amino-6-(D-ribitylamino)uracil = 6,7-dimethyl-8-(1-D-ribityl)lumazine + phosphate + 2 H2O + H(+). The protein operates within cofactor biosynthesis; riboflavin biosynthesis; riboflavin from 2-hydroxy-3-oxobutyl phosphate and 5-amino-6-(D-ribitylamino)uracil: step 1/2. Catalyzes the formation of 6,7-dimethyl-8-ribityllumazine by condensation of 5-amino-6-(D-ribitylamino)uracil with 3,4-dihydroxy-2-butanone 4-phosphate. This is the penultimate step in the biosynthesis of riboflavin. This is 6,7-dimethyl-8-ribityllumazine synthase from Phocaeicola vulgatus (strain ATCC 8482 / DSM 1447 / JCM 5826 / CCUG 4940 / NBRC 14291 / NCTC 11154) (Bacteroides vulgatus).